The primary structure comprises 328 residues: 4-hydroxythreonine-4-phosphate dehydrogenase (328 aa).

Residues His-130 and Thr-131 each coordinate substrate. A divalent metal cation is bound by residues His-163, His-208, and His-263. 3 residues coordinate substrate: Lys-271, Asn-280, and Arg-289.

Belongs to the PdxA family. As to quaternary structure, homodimer. Requires Zn(2+) as cofactor. The cofactor is Mg(2+). Co(2+) serves as cofactor.

It is found in the cytoplasm. It carries out the reaction 4-(phosphooxy)-L-threonine + NAD(+) = 3-amino-2-oxopropyl phosphate + CO2 + NADH. It participates in cofactor biosynthesis; pyridoxine 5'-phosphate biosynthesis; pyridoxine 5'-phosphate from D-erythrose 4-phosphate: step 4/5. In terms of biological role, catalyzes the NAD(P)-dependent oxidation of 4-(phosphooxy)-L-threonine (HTP) into 2-amino-3-oxo-4-(phosphooxy)butyric acid which spontaneously decarboxylates to form 3-amino-2-oxopropyl phosphate (AHAP). This chain is 4-hydroxythreonine-4-phosphate dehydrogenase, found in Burkholderia vietnamiensis (strain G4 / LMG 22486) (Burkholderia cepacia (strain R1808)).